A 60-amino-acid polypeptide reads, in one-letter code: Cytotoxin 10 (60 aa).

Intrachain disulfides connect Cys3/Cys21, Cys14/Cys38, Cys42/Cys53, and Cys54/Cys59.

This sequence belongs to the three-finger toxin family. Short-chain subfamily. Type IA cytotoxin sub-subfamily. In terms of assembly, monomer in solution; Homodimer and oligomer in the presence of negatively charged lipids forming a pore with a size ranging between 20 and 30 Angstroms. Expressed by the venom gland.

Its subcellular location is the secreted. It localises to the target cell membrane. Shows cytolytic activity on many different cells by forming pore in lipid membranes. In vivo, increases heart rate or kills the animal by cardiac arrest. In addition, it binds to heparin with high affinity, interacts with Kv channel-interacting protein 1 (KCNIP1) in a calcium-independent manner, and binds to integrin alpha-V/beta-3 (ITGAV/ITGB3) with moderate affinity. In Naja annulifera (Banded Egyptian cobra), this protein is Cytotoxin 10.